A 545-amino-acid polypeptide reads, in one-letter code: Periplasmic trehalase (545 aa).

The N-terminal stretch at 1–30 (MPDRTALPRAMLAAWVLLLLAACSQGPAPT) is a signal peptide. Substrate-binding positions include Arg-160, 167 to 168 (WD), Asn-204, 213 to 215 (RSQ), 285 to 287 (RQE), and Gly-318. Active-site proton donor/acceptor residues include Asp-320 and Glu-503. Glu-518 is a substrate binding site.

This sequence belongs to the glycosyl hydrolase 37 family.

It localises to the periplasm. It catalyses the reaction alpha,alpha-trehalose + H2O = alpha-D-glucose + beta-D-glucose. Provides the cells with the ability to utilize trehalose at high osmolarity by splitting it into glucose molecules that can subsequently be taken up by the phosphotransferase-mediated uptake system. This chain is Periplasmic trehalase, found in Pseudomonas aeruginosa (strain ATCC 15692 / DSM 22644 / CIP 104116 / JCM 14847 / LMG 12228 / 1C / PRS 101 / PAO1).